Here is a 578-residue protein sequence, read N- to C-terminus: Lipoprotein A (578 aa).

A signal peptide spans 1–27 (MNKKYFKKYSWVLILSTSILAPMTLAS). Cysteine 28 carries N-palmitoyl cysteine lipidation. Residue cysteine 28 is the site of S-diacylglycerol cysteine attachment. Disordered regions lie at residues 35–135 (KEDK…NTSA) and 172–203 (AKDDSKEKSKNSSNLNLKTPVENRQNKNEVKD). Positions 41–50 (NDSSNLSNKT) are enriched in polar residues. A compositionally biased stretch (basic and acidic residues) spans 51 to 74 (NKSDPNDHLKDKDKNVSQDNKDST). Polar residues predominate over residues 75 to 96 (NKAVSNENSQTQSQKTNESSQN). The segment covering 108–119 (ITNQNSSSNTKS) has biased composition (low complexity). The span at 172–181 (AKDDSKEKSK) shows a compositional bias: basic and acidic residues.

Belongs to the M.pulmonis LipAB lipoprotein family.

Its subcellular location is the cell membrane. The sequence is that of Lipoprotein A (lipA) from Mycoplasmopsis pulmonis (strain UAB CTIP) (Mycoplasma pulmonis).